The primary structure comprises 121 residues: Holin-like protein CidA (121 aa).

The next 3 helical transmembrane spans lie at 27-47, 58-78, and 89-109; these read VHLP…SLKF, GADF…VAVI, and IDLI…TGIL.

This sequence belongs to the CidA/LrgA family. CidA subfamily.

The protein localises to the cell membrane. Functionally, increases the activity of extracellular murein hydrolases possibly by mediating their export via hole formation. Inhibited by the antiholin-like proteins LrgAB. In an unstressed cell, the LrgAB products probably inhibit the function of the CidA protein. When a cell is stressed by the addition of antibiotics or by other factors in the environment, CidA possibly oligomerizes within the bacterial cell membrane, creating lesions that disrupt the proton motive force, which in turn results in loss of cell viability. These lesions are also hypothesized to regulate the subsequent cell lysis by either allowing the murein hydrolases access to the cell wall substrate and/or regulating their activity by a possible change in the cell wall pH that results from loss of membrane potential. In Bacillus cytotoxicus (strain DSM 22905 / CIP 110041 / 391-98 / NVH 391-98), this protein is Holin-like protein CidA.